A 244-amino-acid chain; its full sequence is uncharacterized protein (244 aa).

Basic and acidic residues-rich tracts occupy residues 1 to 10 and 100 to 127; these read MNDPFARMET and GTRG…HGEE. Disordered regions lie at residues 1–79, 100–130, and 219–244; these read MNDP…GEEL, GTRG…EPNY, and TGAS…EIKL.

This is an uncharacterized protein from Homo sapiens (Human).